We begin with the raw amino-acid sequence, 326 residues long: Nucleoporin Nup37 (326 aa).

7 WD repeats span residues 6 to 54 (SRNA…FQEE), 61 to 109 (IQYK…LFTS), 115 to 154 (NEYK…IWNL), 159 to 195 (TAHF…FYDL), 199 to 237 (QAIL…IWDI), 242 to 282 (YPQN…QFQI), and 287 to 324 (HPQP…FWVT).

As to quaternary structure, component of the Nup107-160 subcomplex of the nuclear pore complex (NPC). The Nup107-160 subcomplex includes NUP160, NUP133, NUP107, NUP98, NUP85, NUP43, NUP37, SEH1 and SEC13.

Its subcellular location is the chromosome. It is found in the centromere. The protein localises to the kinetochore. It localises to the nucleus. The protein resides in the nuclear pore complex. Component of the Nup107-160 subcomplex of the nuclear pore complex (NPC). The Nup107-160 subcomplex is required for the assembly of a functional NPC. The Nup107-160 subcomplex is also required for normal kinetochore microtubule attachment, mitotic progression and chromosome segregation. The chain is Nucleoporin Nup37 (NUP37) from Homo sapiens (Human).